We begin with the raw amino-acid sequence, 154 residues long: Large ribosomal subunit protein bL9 (154 aa).

Belongs to the bacterial ribosomal protein bL9 family.

In terms of biological role, binds to the 23S rRNA. In Buchnera aphidicola subsp. Baizongia pistaciae (strain Bp), this protein is Large ribosomal subunit protein bL9.